Consider the following 313-residue polypeptide: Tetraspanning orphan receptor (313 aa).

Residues 1-54 (PQCESETNFHYDIPPGYKDDVLVDVNNMSPSLVSDTQKHERGSHEVKIKHFSPY) are Extracellular-facing. The helical transmembrane segment at 55 to 75 (IAVCVTTFSLAFCCFMVHAAI) threads the bilayer. Residues 76–82 (TRQPTHL) are Cytoplasmic-facing. A helical transmembrane segment spans residues 83-103 (LPFFFIQVFDLIICLIHILGF). The Extracellular segment spans residues 104–129 (MSSTSDIRLVIHTKTGPIYIKSTGLT). Residues 130–150 (FIILSISCMMLAFKAYCLGMV) form a helical membrane-spanning segment. Topologically, residues 151–313 (WDCYKYLMLN…NASSNAHSSC (163 aa)) are cytoplasmic. 2 disordered regions span residues 192 to 218 (NNSIGNSGSPNEPNTRPRPDTITYDPA) and 279 to 313 (NTNTSTTTSVISPLTTTNKDDTQINNASSNAHSSC). The segment covering 279-295 (NTNTSTTTSVISPLTTT) has biased composition (low complexity). The segment covering 301-313 (QINNASSNAHSSC) has biased composition (polar residues).

As to quaternary structure, interacts (via N-terminal extracellular domain) with human C2a. Phosphorylated on tyrosine residues.

Its subcellular location is the cell membrane. Its function is as follows. Cell surface receptor that binds to human complement C2a protein. This results in inhibition of the classical and lectin pathways of complement activation, probably due to interference with binding of C2a to C4b and interference with cleavage by C1 or MASP2 such that C3 convertase cannot be formed. This infers resistance to complement-mediated cell lysis, allowing parasite survival and infection. The chain is Tetraspanning orphan receptor from Schistosoma haematobium (Blood fluke).